Consider the following 251-residue polypeptide: uncharacterized protein (251 aa).

The protein to Anabaena PCC 7120 alr2406.

This is an uncharacterized protein from Synechocystis sp. (strain ATCC 27184 / PCC 6803 / Kazusa).